Consider the following 672-residue polypeptide: DNA ligase (672 aa).

NAD(+) contacts are provided by residues 34–38, 83–84, and E113; these read DSVYD and SL. Residue K115 is the N6-AMP-lysine intermediate of the active site. Residues R136, E170, K286, and K310 each coordinate NAD(+). Zn(2+) is bound by residues C404, C407, C422, and C427. Residues 592–672 enclose the BRCT domain; sequence STDSSFNGLR…EFIQQMEEES (81 aa).

The protein belongs to the NAD-dependent DNA ligase family. LigA subfamily. Requires Mg(2+) as cofactor. Mn(2+) serves as cofactor.

It carries out the reaction NAD(+) + (deoxyribonucleotide)n-3'-hydroxyl + 5'-phospho-(deoxyribonucleotide)m = (deoxyribonucleotide)n+m + AMP + beta-nicotinamide D-nucleotide.. In terms of biological role, DNA ligase that catalyzes the formation of phosphodiester linkages between 5'-phosphoryl and 3'-hydroxyl groups in double-stranded DNA using NAD as a coenzyme and as the energy source for the reaction. It is essential for DNA replication and repair of damaged DNA. The sequence is that of DNA ligase from Ligilactobacillus salivarius (strain UCC118) (Lactobacillus salivarius).